We begin with the raw amino-acid sequence, 39 residues long: Photosystem II reaction center protein L (39 aa).

The chain crosses the membrane as a helical span at residues 18 to 38; that stretch reads SLYLGLLLVFVTGVLFSSYFF.

This sequence belongs to the PsbL family. As to quaternary structure, PSII is composed of 1 copy each of membrane proteins PsbA, PsbB, PsbC, PsbD, PsbE, PsbF, PsbH, PsbI, PsbJ, PsbK, PsbL, PsbM, PsbT, PsbX, PsbY, PsbZ, Psb30/Ycf12, at least 3 peripheral proteins of the oxygen-evolving complex and a large number of cofactors. It forms dimeric complexes.

The protein resides in the plastid. It localises to the organellar chromatophore thylakoid membrane. One of the components of the core complex of photosystem II (PSII). PSII is a light-driven water:plastoquinone oxidoreductase that uses light energy to abstract electrons from H(2)O, generating O(2) and a proton gradient subsequently used for ATP formation. It consists of a core antenna complex that captures photons, and an electron transfer chain that converts photonic excitation into a charge separation. This subunit is found at the monomer-monomer interface and is required for correct PSII assembly and/or dimerization. The protein is Photosystem II reaction center protein L of Paulinella chromatophora.